The chain runs to 273 residues: Probable glycerophosphodiester phosphodiesterase GpdQ (273 aa).

Asp-8, His-10, Asp-50, Asn-80, His-154, His-194, and His-196 together coordinate Fe cation.

This sequence belongs to the cyclic nucleotide phosphodiesterase class-III family. Requires Fe(2+) as cofactor.

It carries out the reaction a sn-glycero-3-phosphodiester + H2O = an alcohol + sn-glycerol 3-phosphate + H(+). The enzyme catalyses sn-glycero-3-phosphoethanolamine + H2O = ethanolamine + sn-glycerol 3-phosphate + H(+). Its function is as follows. Catalyzes the hydrolysis of the 3'-5' phosphodiester bond of glycerophosphodiesters such as glycerophosphorylethanolamine (GPE), a typical phospholipid metabolite. The chain is Probable glycerophosphodiester phosphodiesterase GpdQ from Arcobacter nitrofigilis (strain ATCC 33309 / DSM 7299 / CCUG 15893 / LMG 7604 / NCTC 12251 / CI) (Campylobacter nitrofigilis).